A 466-amino-acid polypeptide reads, in one-letter code: Ribulose bisphosphate carboxylase/oxygenase activase, chloroplastic (466 aa).

Residues Met1–Ala48 constitute a chloroplast transit peptide. Residue Gly156 to Ser163 coordinates ATP. Residues Gln429 to Thr454 are disordered.

It belongs to the RuBisCO activase family.

The protein localises to the plastid. It is found in the chloroplast stroma. Functionally, activation of RuBisCO (ribulose-1,5-bisphosphate carboxylase/oxygenase; EC 4.1.1.39) involves the ATP-dependent carboxylation of the epsilon-amino group of lysine leading to a carbamate structure. In Oryza sativa subsp. japonica (Rice), this protein is Ribulose bisphosphate carboxylase/oxygenase activase, chloroplastic (RCA).